The primary structure comprises 438 residues: Ubiquitin carboxyl-terminal hydrolase 27 (438 aa).

Residues 78–421 enclose the USP domain; that stretch reads RGLINLGNTC…EGYLLFYHKQ (344 aa). Catalysis depends on Cys-87, which acts as the Nucleophile. The Proton acceptor role is filled by His-380.

Belongs to the peptidase C19 family. In terms of assembly, interacts with phosphorylated BCL2L11 isoform BIMEL; this interaction leads to BCL2L11 deubiquitination and stabilization.

It is found in the cytoplasm. The protein resides in the cytosol. The protein localises to the nucleus. It catalyses the reaction Thiol-dependent hydrolysis of ester, thioester, amide, peptide and isopeptide bonds formed by the C-terminal Gly of ubiquitin (a 76-residue protein attached to proteins as an intracellular targeting signal).. Deubiquitinase involved in innate antiviral immunity by mediating deubiquitination of CGAS and RIGI. Negatively regulates RIGI by mediating 'Lys-63'-linked deubiquitination of RIGI, inhibiting type I interferon signaling. Also regulates 'Lys-63'-linked ubiquitination level of MDA5/IFIH1. Acts as a positive regulator of the cGAS-STING pathway by catalyzing 'Lys-48'-linked deubiquitination of CGAS, thereby promoting its stabilization. Can reduce the levels of BCL2L11/BIM ubiquitination and stabilize BCL2L11 in response to the RAF-MAPK-degradation signal. By acting on BCL2L11 levels, may counteract the anti-apoptotic effects of MAPK activity. This Homo sapiens (Human) protein is Ubiquitin carboxyl-terminal hydrolase 27.